Here is a 158-residue protein sequence, read N- to C-terminus: G-protein-signaling modulator 3 (158 aa).

The disordered stretch occupies residues Met-1–Gly-53. A phosphoserine mark is found at Ser-33 and Ser-37. Residues Ser-33–Gly-42 show a composition bias toward pro residues. A compositionally biased stretch (low complexity) spans Thr-43 to Gly-53. A phosphoserine mark is found at Ser-54 and Ser-57. Thr-60 bears the Phosphothreonine mark. The region spanning Thr-60–Phe-82 is the GoLoco 1 domain. The segment at Gln-78–Arg-97 is disordered. Over residues Lys-86–Pro-96 the composition is skewed to pro residues. 2 consecutive GoLoco domains span residues Lys-102–Pro-124 and Gly-130–Pro-153.

The protein resides in the cytoplasm. In terms of biological role, interacts with subunit of G(i) alpha proteins and regulates the activation of G(i) alpha proteins. The chain is G-protein-signaling modulator 3 (Gpsm3) from Rattus norvegicus (Rat).